We begin with the raw amino-acid sequence, 313 residues long: Protein FixB (313 aa).

255-283 (LYLAVGISGQIQHMVGANASQTIFAINKD) contacts FAD.

This sequence belongs to the ETF alpha-subunit/FixB family. As to quaternary structure, heterodimer of FixA and FixB.

Its pathway is amine and polyamine metabolism; carnitine metabolism. Its function is as follows. Required for anaerobic carnitine reduction. May bring reductant to CaiA. This chain is Protein FixB, found in Escherichia coli O7:K1 (strain IAI39 / ExPEC).